The following is a 151-amino-acid chain: Nucleoside diphosphate kinase (151 aa).

ATP contacts are provided by lysine 11, phenylalanine 59, arginine 87, threonine 93, arginine 104, and asparagine 114. Catalysis depends on histidine 117, which acts as the Pros-phosphohistidine intermediate.

The protein belongs to the NDK family. In terms of assembly, homotetramer. Mg(2+) serves as cofactor.

The protein resides in the cytoplasm. The catalysed reaction is a 2'-deoxyribonucleoside 5'-diphosphate + ATP = a 2'-deoxyribonucleoside 5'-triphosphate + ADP. It carries out the reaction a ribonucleoside 5'-diphosphate + ATP = a ribonucleoside 5'-triphosphate + ADP. In terms of biological role, major role in the synthesis of nucleoside triphosphates other than ATP. The ATP gamma phosphate is transferred to the NDP beta phosphate via a ping-pong mechanism, using a phosphorylated active-site intermediate. The sequence is that of Nucleoside diphosphate kinase from Prochlorococcus marinus (strain NATL2A).